The sequence spans 210 residues: Ion-translocating oxidoreductase complex subunit G (210 aa).

The helical transmembrane segment at Ser9–Leu29 threads the bilayer. Thr176 bears the FMN phosphoryl threonine mark.

It belongs to the RnfG family. The complex is composed of six subunits: RnfA, RnfB, RnfC, RnfD, RnfE and RnfG. It depends on FMN as a cofactor.

The protein resides in the cell inner membrane. Functionally, part of a membrane-bound complex that couples electron transfer with translocation of ions across the membrane. This is Ion-translocating oxidoreductase complex subunit G from Aliivibrio fischeri (strain MJ11) (Vibrio fischeri).